A 534-amino-acid polypeptide reads, in one-letter code: Paired box protein Pax-1 (534 aa).

The paired DNA-binding region spans 98 to 224 (TYGEVNQLGG…SSISRILRNK (127 aa)). The tract at residues 101–157 (EVNQLGGVFVNGRPLPNAIRLRIVELAQLGIRPCDISRQLRVSHGCVSKILARYNET) is PAI subdomain. The RED subdomain stretch occupies residues 176–224 (NVVKHIRDYKQGDPGIFAWEIRDRLLADGVCDKYNVPSVSSISRILRNK). 2 disordered regions span residues 424 to 480 (PSRE…AAAP) and 492 to 511 (EEEA…QAQP).

It localises to the nucleus. In terms of biological role, this protein is a transcriptional activator. It may play a role in the formation of segmented structures of the embryo. May play an important role in the normal development of the vertebral column. The sequence is that of Paired box protein Pax-1 (PAX1) from Homo sapiens (Human).